The chain runs to 496 residues: MSTEHMEELNDQQIVRREKMAALREQGIDPFGKRFERTANSQELKDKYANLDKEQLHDKNETATIAGRLITKRGKGKVGFAHLQDREGQIQIYVRKDAVGEENYEIFKKADLGDFLGVEGEVMRTDMGELSIKATHITHLSKALRPLPEKFHGLTDVETIYRKRYLDLISNRESFERFVTRSKIISEIRRYLDQKGFLEVETPVLHNEAGGAAARPFITHHNAQNIDMVLRIATELHLKRLIVGGMERVYEIGRIFRNEGMDATHNPEFTSIEVYQAYADFQDIMDLTEGIIQHAAKSVKGDGPVNYQGTEIKINEPFKRVHMVDAIREITGVDFWQDMTLEEAKAIAAEKKVPVEKHYTEVGHIINAFFEEFVEETLIQPTFVYGHPVAVSPLAKKNPEDQRFTDRFELFIMTKEYGNAFTELNDPIDQLSRFEAQAKAKELGDDEATGIDYDYIEALEYGMPPTGGLGIGIDRLCMLLTDTTTIRDVLLFPTMK.

Mg(2+)-binding residues include glutamate 409 and glutamate 416.

It belongs to the class-II aminoacyl-tRNA synthetase family. As to quaternary structure, homodimer. Requires Mg(2+) as cofactor.

The protein resides in the cytoplasm. The catalysed reaction is tRNA(Lys) + L-lysine + ATP = L-lysyl-tRNA(Lys) + AMP + diphosphate. This chain is Lysine--tRNA ligase, found in Streptococcus pneumoniae serotype 4 (strain ATCC BAA-334 / TIGR4).